Reading from the N-terminus, the 70-residue chain is DNA-directed RNA polymerase subunit epsilon (70 aa).

The protein belongs to the RNA polymerase subunit epsilon family. RNAP is composed of a core of 2 alpha, a beta and a beta' subunit. The core is associated with a delta subunit, and at least one of epsilon or omega. When a sigma factor is associated with the core the holoenzyme is formed, which can initiate transcription.

It catalyses the reaction RNA(n) + a ribonucleoside 5'-triphosphate = RNA(n+1) + diphosphate. Its function is as follows. A non-essential component of RNA polymerase (RNAP). In Latilactobacillus sakei subsp. sakei (strain 23K) (Lactobacillus sakei subsp. sakei), this protein is DNA-directed RNA polymerase subunit epsilon.